A 409-amino-acid chain; its full sequence is Elongation factor Tu (409 aa).

One can recognise a tr-type G domain in the interval 10-214; sequence KPHVNIGTIG…EVDAYIPTPE (205 aa). A G1 region spans residues 19–26; sequence GHVDHGKT. 19–26 provides a ligand contact to GTP; that stretch reads GHVDHGKT. Thr-26 lines the Mg(2+) pocket. Residues 60–64 are G2; that stretch reads GITIN. Positions 81–84 are G3; it reads DCPG. Residues 81-85 and 136-139 contribute to the GTP site; these read DCPGH and NKQD. The segment at 136–139 is G4; sequence NKQD. Residues 174 to 176 are G5; the sequence is SAL.

This sequence belongs to the TRAFAC class translation factor GTPase superfamily. Classic translation factor GTPase family. EF-Tu/EF-1A subfamily. Monomer.

Its subcellular location is the cytoplasm. It catalyses the reaction GTP + H2O = GDP + phosphate + H(+). In terms of biological role, GTP hydrolase that promotes the GTP-dependent binding of aminoacyl-tRNA to the A-site of ribosomes during protein biosynthesis. The polypeptide is Elongation factor Tu (Acaryochloris marina (strain MBIC 11017)).